Here is a 59-residue protein sequence, read N- to C-terminus: Small ribosomal subunit protein bS21 (59 aa).

A disordered region spans residues 39 to 59 (ETPVEKYKRKQRLKNRTKRRR). The span at 45-59 (YKRKQRLKNRTKRRR) shows a compositional bias: basic residues.

Belongs to the bacterial ribosomal protein bS21 family.

The sequence is that of Small ribosomal subunit protein bS21 from Prochlorococcus marinus (strain SARG / CCMP1375 / SS120).